We begin with the raw amino-acid sequence, 549 residues long: Glucose-6-phosphate isomerase (549 aa).

Glu355 serves as the catalytic Proton donor. Active-site residues include His386 and Lys514.

This sequence belongs to the GPI family.

The protein resides in the cytoplasm. It catalyses the reaction alpha-D-glucose 6-phosphate = beta-D-fructose 6-phosphate. It functions in the pathway carbohydrate biosynthesis; gluconeogenesis. It participates in carbohydrate degradation; glycolysis; D-glyceraldehyde 3-phosphate and glycerone phosphate from D-glucose: step 2/4. Catalyzes the reversible isomerization of glucose-6-phosphate to fructose-6-phosphate. This chain is Glucose-6-phosphate isomerase, found in Cronobacter sakazakii (strain ATCC BAA-894) (Enterobacter sakazakii).